Consider the following 378-residue polypeptide: Nucleosome assembly protein 1;1 (378 aa).

Residues 33–87 (VNALKDKLQSLAGQHTDVLEALSPNVRKRVEYLREIQGQHDEIELKFFEERAALE) are a coiled coil. The Nuclear export signal signature appears at 54–69 (LSPNVRKRVEYLREIQ). The short motif at 230 to 235 (KKKPKK) is the Nuclear localization signal element. The tract at residues 306-378 (AVQAEDFDDM…ADQPADCKQQ (73 aa)) is disordered. The segment covering 308-344 (QAEDFDDMEDDEEDDEDDDEDEEEEEEDEDEDEDDEE) has biased composition (acidic residues). The Nuclear localization signal motif lies at 348–352 (KPKKK). The segment covering 356 to 378 (KPKLPSKGGAQGGADQPADCKQQ) has biased composition (low complexity). Cysteine 375 is subject to Cysteine methyl ester. The S-farnesyl cysteine moiety is linked to residue cysteine 375. The propeptide at 376-378 (KQQ) is removed in mature form.

Belongs to the nucleosome assembly protein (NAP) family.

It is found in the nucleus. The protein resides in the cytoplasm. Its function is as follows. May modulate chromatin structure by regulation of nucleosome assembly/disassembly. The sequence is that of Nucleosome assembly protein 1;1 (NAP1;1) from Oryza sativa subsp. japonica (Rice).